Consider the following 126-residue polypeptide: Prefoldin subunit beta (126 aa).

This sequence belongs to the prefoldin subunit beta family. Heterohexamer of two alpha and four beta subunits.

The protein resides in the cytoplasm. In terms of biological role, molecular chaperone capable of stabilizing a range of proteins. Seems to fulfill an ATP-independent, HSP70-like function in archaeal de novo protein folding. This Methanocella arvoryzae (strain DSM 22066 / NBRC 105507 / MRE50) protein is Prefoldin subunit beta.